The primary structure comprises 261 residues: Kallikrein 1-related peptidase b11 (261 aa).

The N-terminal stretch at 1–18 (MWFLILFLALSLGGIDAA) is a signal peptide. Residues 19-24 (PPVQSR) constitute a propeptide, activation peptide. The region spanning 25-258 (IVGGFNCEKN…FTNWIKDTMA (234 aa)) is the Peptidase S1 domain. 5 cysteine pairs are disulfide-bonded: C31–C173, C50–C66, C152–C219, C184–C198, and C209–C234. H65 serves as the catalytic Charge relay system. N-linked (GlcNAc...) asparagine glycosylation occurs at N102. Residue D120 is the Charge relay system of the active site. The active-site Charge relay system is S213.

The protein belongs to the peptidase S1 family. Kallikrein subfamily.

It catalyses the reaction Preferential cleavage of Arg-|-Xaa bonds in small molecule substrates. Highly selective action to release kallidin (lysyl-bradykinin) from kininogen involves hydrolysis of Met-|-Xaa or Leu-|-Xaa.. Glandular kallikreins cleave Met-Lys and Arg-Ser bonds in kininogen to release Lys-bradykinin. The polypeptide is Kallikrein 1-related peptidase b11 (Klk1b11) (Mus musculus (Mouse)).